Consider the following 286-residue polypeptide: Urease accessory protein UreD (286 aa).

This sequence belongs to the UreD family. UreD, UreF and UreG form a complex that acts as a GTP-hydrolysis-dependent molecular chaperone, activating the urease apoprotein by helping to assemble the nickel containing metallocenter of UreC. The UreE protein probably delivers the nickel.

The protein resides in the cytoplasm. In terms of biological role, required for maturation of urease via the functional incorporation of the urease nickel metallocenter. In Rhodopseudomonas palustris (strain BisA53), this protein is Urease accessory protein UreD.